The following is a 24-amino-acid chain: Humanin-like 12 (24 aa).

This sequence belongs to the humanin family.

The protein resides in the secreted. It is found in the cytoplasm. Functionally, plays a role as a neuroprotective and antiapoptotic factor. This is Humanin-like 12 from Homo sapiens (Human).